A 144-amino-acid polypeptide reads, in one-letter code: D-aminoacyl-tRNA deacylase (144 aa).

The Gly-cisPro motif, important for rejection of L-amino acids motif lies at 136 to 137 (GP).

It belongs to the DTD family. As to quaternary structure, homodimer.

The protein resides in the cytoplasm. The catalysed reaction is glycyl-tRNA(Ala) + H2O = tRNA(Ala) + glycine + H(+). It catalyses the reaction a D-aminoacyl-tRNA + H2O = a tRNA + a D-alpha-amino acid + H(+). In terms of biological role, an aminoacyl-tRNA editing enzyme that deacylates mischarged D-aminoacyl-tRNAs. Also deacylates mischarged glycyl-tRNA(Ala), protecting cells against glycine mischarging by AlaRS. Acts via tRNA-based rather than protein-based catalysis; rejects L-amino acids rather than detecting D-amino acids in the active site. By recycling D-aminoacyl-tRNA to D-amino acids and free tRNA molecules, this enzyme counteracts the toxicity associated with the formation of D-aminoacyl-tRNA entities in vivo and helps enforce protein L-homochirality. In Corynebacterium efficiens (strain DSM 44549 / YS-314 / AJ 12310 / JCM 11189 / NBRC 100395), this protein is D-aminoacyl-tRNA deacylase.